Consider the following 197-residue polypeptide: Recombination protein RecR (197 aa).

The C4-type zinc finger occupies 56 to 71; it reads CKRCGSYAETEICNIC. The region spanning 79 to 174 is the Toprim domain; it reads HTFCVVEQPE…DVTRIAYGIT (96 aa).

Belongs to the RecR family.

May play a role in DNA repair. It seems to be involved in an RecBC-independent recombinational process of DNA repair. It may act with RecF and RecO. This chain is Recombination protein RecR, found in Leptospira borgpetersenii serovar Hardjo-bovis (strain JB197).